The primary structure comprises 467 residues: Pachytene checkpoint protein 2 homolog (467 aa).

Residue 209–216 (GPPGTGKT) coordinates ATP.

This sequence belongs to the AAA ATPase family. PCH2 subfamily.

It is found in the chromosome. Plays a key role in chromosome recombination during meiosis. Mediates meiotic chromosome remodeling and crossover maturation. The sequence is that of Pachytene checkpoint protein 2 homolog from Arabidopsis thaliana (Mouse-ear cress).